Reading from the N-terminus, the 214-residue chain is tRNA (guanine-N(7)-)-methyltransferase (214 aa).

4 residues coordinate S-adenosyl-L-methionine: glutamate 43, glutamate 68, aspartate 95, and aspartate 117. Aspartate 117 is an active-site residue. Residues lysine 121, aspartate 153, and 191-194 (TEYE) contribute to the substrate site.

Belongs to the class I-like SAM-binding methyltransferase superfamily. TrmB family.

It carries out the reaction guanosine(46) in tRNA + S-adenosyl-L-methionine = N(7)-methylguanosine(46) in tRNA + S-adenosyl-L-homocysteine. It participates in tRNA modification; N(7)-methylguanine-tRNA biosynthesis. In terms of biological role, catalyzes the formation of N(7)-methylguanine at position 46 (m7G46) in tRNA. The polypeptide is tRNA (guanine-N(7)-)-methyltransferase (Lachnoclostridium phytofermentans (strain ATCC 700394 / DSM 18823 / ISDg) (Clostridium phytofermentans)).